Reading from the N-terminus, the 276-residue chain is Formamidopyrimidine-DNA glycosylase (276 aa).

Residue Pro2 is the Schiff-base intermediate with DNA of the active site. Catalysis depends on Glu3, which acts as the Proton donor. The active-site Proton donor; for beta-elimination activity is the Lys59. DNA contacts are provided by His93, Arg112, and Arg155. An FPG-type zinc finger spans residues Gln240–Lys274. The active-site Proton donor; for delta-elimination activity is Arg264.

Belongs to the FPG family. In terms of assembly, monomer. Requires Zn(2+) as cofactor.

The enzyme catalyses Hydrolysis of DNA containing ring-opened 7-methylguanine residues, releasing 2,6-diamino-4-hydroxy-5-(N-methyl)formamidopyrimidine.. It catalyses the reaction 2'-deoxyribonucleotide-(2'-deoxyribose 5'-phosphate)-2'-deoxyribonucleotide-DNA = a 3'-end 2'-deoxyribonucleotide-(2,3-dehydro-2,3-deoxyribose 5'-phosphate)-DNA + a 5'-end 5'-phospho-2'-deoxyribonucleoside-DNA + H(+). Involved in base excision repair of DNA damaged by oxidation or by mutagenic agents. Acts as a DNA glycosylase that recognizes and removes damaged bases. Has a preference for oxidized purines, such as 7,8-dihydro-8-oxoguanine (8-oxoG). Has AP (apurinic/apyrimidinic) lyase activity and introduces nicks in the DNA strand. Cleaves the DNA backbone by beta-delta elimination to generate a single-strand break at the site of the removed base with both 3'- and 5'-phosphates. This Pelotomaculum thermopropionicum (strain DSM 13744 / JCM 10971 / SI) protein is Formamidopyrimidine-DNA glycosylase.